A 226-amino-acid polypeptide reads, in one-letter code: Amelogenin (226 aa).

An N-terminal signal peptide occupies residues 1-16; sequence MGTWILFACLLGTAFA. Ser32 bears the Phosphoserine mark. A disordered region spans residues 86-196; the sequence is QQHPPSHTTL…LPPQQALPPM (111 aa). Composition is skewed to low complexity over residues 88-120 and 137-182; these read HPPS…MPVP and PTSQ…SPLH. The segment covering 183–192 has biased composition (pro residues); sequence PIQPLPPQQA.

It belongs to the amelogenin family.

It localises to the secreted. It is found in the extracellular space. The protein resides in the extracellular matrix. Plays a role in the biomineralization of teeth. Seems to regulate the formation of crystallites during the secretory stage of tooth enamel development. Thought to play a major role in the structural organization and mineralization of developing enamel. The protein is Amelogenin (AMEL) of Cavia porcellus (Guinea pig).